The chain runs to 70 residues: Conotoxin Vc6.10 (70 aa).

A signal peptide spans 1 to 19; it reads MEKLTILLLVAAVLTSTQA. The propeptide occupies 20-40; that stretch reads LIQGGADERQKAKINFLSRSD. 3 disulfides stabilise this stretch: cysteine 43-cysteine 57, cysteine 50-cysteine 62, and cysteine 56-cysteine 69.

The protein belongs to the conotoxin O2 superfamily. Expressed by the venom duct.

It localises to the secreted. Its function is as follows. Inhibits voltage-gated ion channels. The polypeptide is Conotoxin Vc6.10 (Conus victoriae (Queen Victoria cone)).